The following is a 341-amino-acid chain: S-adenosylmethionine:tRNA ribosyltransferase-isomerase (341 aa).

It belongs to the QueA family. In terms of assembly, monomer.

It localises to the cytoplasm. The catalysed reaction is 7-aminomethyl-7-carbaguanosine(34) in tRNA + S-adenosyl-L-methionine = epoxyqueuosine(34) in tRNA + adenine + L-methionine + 2 H(+). It functions in the pathway tRNA modification; tRNA-queuosine biosynthesis. Its function is as follows. Transfers and isomerizes the ribose moiety from AdoMet to the 7-aminomethyl group of 7-deazaguanine (preQ1-tRNA) to give epoxyqueuosine (oQ-tRNA). The chain is S-adenosylmethionine:tRNA ribosyltransferase-isomerase from Clostridium botulinum (strain ATCC 19397 / Type A).